The primary structure comprises 462 residues: MLDFAIFAVTFLLALVGAVLYLYPASRQASGIPGLTPTEEKDGNLPDIVNSGSLHEFLVNLHERYGPVVSFWFGRRLVVSLGTTDVLKQHFNPNKTSDPFETMLKSLLGYQSGGGSAGEDHVRRKLYGDAVTASLHSNFPLLLQLSEELLDKWLSYPETQHIPLSQHMLGFALKFVTRMVLGSTFEDEQEVIRFQKIHGTVWSEIGKGFLDGSLDKNTTRKKQYQEALMQLESTLKKIIKERKGGNFRQHTFIDSLTQGKLNEQQILEDCVVFSLASCIITARLCTWTIHFLTTTGEVQKKLCKEIDQVLGEGPITSEKIEQLSYCQQVLFETVRTAKLTPVSARLQDIEGKVGPFVIPKETLVLYALGVVLQDPSTWPLPHRFDPDRFADEPVMKVFSSLGFSGTWECPELRFAYMVTAVLVSVLLKRLRLLAVDRQVFEMKYELVTSAREEAWITVSKRH.

Residues 4–24 (FAIFAVTFLLALVGAVLYLYP) traverse the membrane as a helical segment. Cysteine 409 contributes to the heme binding site.

The protein belongs to the cytochrome P450 family. Requires heme as cofactor.

The protein localises to the membrane. In Mus musculus (Mouse), this protein is Cytochrome P450 20A1 (Cyp20a1).